The chain runs to 355 residues: UDP-3-O-acylglucosamine N-acyltransferase (355 aa).

Catalysis depends on H258, which acts as the Proton acceptor.

Belongs to the transferase hexapeptide repeat family. LpxD subfamily. In terms of assembly, homotrimer.

It catalyses the reaction a UDP-3-O-[(3R)-3-hydroxyacyl]-alpha-D-glucosamine + a (3R)-hydroxyacyl-[ACP] = a UDP-2-N,3-O-bis[(3R)-3-hydroxyacyl]-alpha-D-glucosamine + holo-[ACP] + H(+). Its pathway is bacterial outer membrane biogenesis; LPS lipid A biosynthesis. Catalyzes the N-acylation of UDP-3-O-acylglucosamine using 3-hydroxyacyl-ACP as the acyl donor. Is involved in the biosynthesis of lipid A, a phosphorylated glycolipid that anchors the lipopolysaccharide to the outer membrane of the cell. This chain is UDP-3-O-acylglucosamine N-acyltransferase, found in Rhizobium rhizogenes (strain K84 / ATCC BAA-868) (Agrobacterium radiobacter).